The chain runs to 612 residues: Elongation factor 4 (612 aa).

The tr-type G domain occupies 12–194 (SRIRNFSIIA…QIVEKVPAPA (183 aa)). Residues 24 to 29 (DHGKST) and 141 to 144 (NKID) each bind GTP.

Belongs to the TRAFAC class translation factor GTPase superfamily. Classic translation factor GTPase family. LepA subfamily.

It is found in the cell membrane. The catalysed reaction is GTP + H2O = GDP + phosphate + H(+). Its function is as follows. Required for accurate and efficient protein synthesis under certain stress conditions. May act as a fidelity factor of the translation reaction, by catalyzing a one-codon backward translocation of tRNAs on improperly translocated ribosomes. Back-translocation proceeds from a post-translocation (POST) complex to a pre-translocation (PRE) complex, thus giving elongation factor G a second chance to translocate the tRNAs correctly. Binds to ribosomes in a GTP-dependent manner. The protein is Elongation factor 4 of Bacillus pumilus (strain SAFR-032).